A 51-amino-acid chain; its full sequence is uncharacterized protein (51 aa).

This is an uncharacterized protein from Saccharomyces cerevisiae (strain ATCC 204508 / S288c) (Baker's yeast).